A 391-amino-acid polypeptide reads, in one-letter code: MLDWYISVSFGELTLKGKNRHTFEKRAISKILDAISDYKIEEYYQEQGKLYIKADVNDFDEIIDHIKKVFGIVYISPCVKCEKTVESMQDGVLKIIEGKIIKDKLQTFKVDVHRVDKRFEPKSPELNPLLGGTILKKYGNYVKVDIKNPDFFIYVDIKDNCYVYTDRIKGWGGLPIGSSGRGLLLLSGGIDSPVAAFLMAKRGVRVDCLHFHSYPFTSQRGFEKVKQLAEEVSYYTGNINFYSVNLLPVYKAITKNCKERMMTIISRRFMMRIAERIANENKIDALITGESLGQVASQTIQGVSVINEVTSLPILRPLIASDKTEIIEIAREIGTYETSILPFEDCCTVFTPKRPVTKPRIYDVKREEENLDIEALVQECIDNMELIKIRQ.

Residues 60-167 (DEIIDHIKKV…KDNCYVYTDR (108 aa)) enclose the THUMP domain. ATP-binding positions include 185 to 186 (LL), 210 to 211 (HF), Arg-267, Gly-289, and Gln-298.

Belongs to the ThiI family.

The protein localises to the cytoplasm. The enzyme catalyses [ThiI sulfur-carrier protein]-S-sulfanyl-L-cysteine + a uridine in tRNA + 2 reduced [2Fe-2S]-[ferredoxin] + ATP + H(+) = [ThiI sulfur-carrier protein]-L-cysteine + a 4-thiouridine in tRNA + 2 oxidized [2Fe-2S]-[ferredoxin] + AMP + diphosphate. It catalyses the reaction [ThiS sulfur-carrier protein]-C-terminal Gly-Gly-AMP + S-sulfanyl-L-cysteinyl-[cysteine desulfurase] + AH2 = [ThiS sulfur-carrier protein]-C-terminal-Gly-aminoethanethioate + L-cysteinyl-[cysteine desulfurase] + A + AMP + 2 H(+). It participates in cofactor biosynthesis; thiamine diphosphate biosynthesis. In terms of biological role, catalyzes the ATP-dependent transfer of a sulfur to tRNA to produce 4-thiouridine in position 8 of tRNAs, which functions as a near-UV photosensor. Also catalyzes the transfer of sulfur to the sulfur carrier protein ThiS, forming ThiS-thiocarboxylate. This is a step in the synthesis of thiazole, in the thiamine biosynthesis pathway. The sulfur is donated as persulfide by IscS. In Finegoldia magna (strain ATCC 29328 / DSM 20472 / WAL 2508) (Peptostreptococcus magnus), this protein is Probable tRNA sulfurtransferase.